The primary structure comprises 577 residues: PTS system lactose-specific EIICB component (577 aa).

One can recognise a PTS EIIC type-3 domain in the interval 4 to 405 (VFDKLKPVFE…VLDVAIYFPF (402 aa)). Helical transmembrane passes span 27–47 (GFIACMPIIIFSSIFMMVAYV), 63–83 (LMVAYNYSMGLLALFVAGTTA), 100–120 (INPVAVIVASEISFVILSILP), 133–153 (QGLICAYIVGLIVPNIYYVCI), 176–196 (LIPMGLSVTAFWLFGVGFKAA), 219–239 (YLGLALIAGAMAFFWFCGVQG), 280–300 (VMNFGGTGATLVVPFIMLFAA), 326–346 (FGMPIIMNPMLFIPFLATPIV), and 386–406 (LAFVFVLLTLVLDVAIYFPFI). The 102-residue stretch at 476 to 577 (EVDVLVLCAG…MALDFVESNL (102 aa)) folds into the PTS EIIB type-3 domain. Catalysis depends on cysteine 483, which acts as the Phosphocysteine intermediate; for EIIB activity. Position 483 is a phosphocysteine; by EIIA (cysteine 483).

The protein resides in the cell membrane. The enzyme catalyses lactose(out) + N(pros)-phospho-L-histidyl-[protein] = lactose 6-phosphate(in) + L-histidyl-[protein]. In terms of biological role, the phosphoenolpyruvate-dependent sugar phosphotransferase system (sugar PTS), a major carbohydrate active transport system, catalyzes the phosphorylation of incoming sugar substrates concomitantly with their translocation across the cell membrane. The enzyme II LacEF PTS system is involved in lactose transport. This is PTS system lactose-specific EIICB component from Lacticaseibacillus casei (Lactobacillus casei).